The sequence spans 403 residues: Acetylornithine aminotransferase (403 aa).

Residues glycine 107 to alanine 108 and phenylalanine 140 contribute to the pyridoxal 5'-phosphate site. Residue arginine 143 participates in N(2)-acetyl-L-ornithine binding. Aspartate 225–glutamine 228 provides a ligand contact to pyridoxal 5'-phosphate. Lysine 254 carries the N6-(pyridoxal phosphate)lysine modification. Position 282 (serine 282) interacts with N(2)-acetyl-L-ornithine. Threonine 283 provides a ligand contact to pyridoxal 5'-phosphate.

The protein belongs to the class-III pyridoxal-phosphate-dependent aminotransferase family. ArgD subfamily. In terms of assembly, homodimer. The cofactor is pyridoxal 5'-phosphate.

It is found in the cytoplasm. It carries out the reaction N(2)-acetyl-L-ornithine + 2-oxoglutarate = N-acetyl-L-glutamate 5-semialdehyde + L-glutamate. Its pathway is amino-acid biosynthesis; L-arginine biosynthesis; N(2)-acetyl-L-ornithine from L-glutamate: step 4/4. This Vibrio cholerae serotype O1 (strain ATCC 39315 / El Tor Inaba N16961) protein is Acetylornithine aminotransferase.